Consider the following 150-residue polypeptide: Cytochrome c-type biogenesis protein CcmE (150 aa).

The Cytoplasmic segment spans residues 1–7; that stretch reads MTRKQKR. The helical; Signal-anchor for type II membrane protein transmembrane segment at 8–28 threads the bilayer; it reads LAIIGGGVAFLTAAVLLVMFA. The Periplasmic portion of the chain corresponds to 29 to 150; it reads FSQAVAYFYV…VTLGGEENIR (122 aa). Heme-binding residues include H123 and Y127.

This sequence belongs to the CcmE/CycJ family.

Its subcellular location is the cell inner membrane. Its function is as follows. Heme chaperone required for the biogenesis of c-type cytochromes. Transiently binds heme delivered by CcmC and transfers the heme to apo-cytochromes in a process facilitated by CcmF and CcmH. This Rhizobium meliloti (strain 1021) (Ensifer meliloti) protein is Cytochrome c-type biogenesis protein CcmE.